The chain runs to 206 residues: LexA repressor (206 aa).

Positions 28-48 (VREICAAVGLSSTSTVHGHLT) form a DNA-binding region, H-T-H motif. Catalysis depends on for autocatalytic cleavage activity residues S127 and K165.

The protein belongs to the peptidase S24 family. Homodimer.

It catalyses the reaction Hydrolysis of Ala-|-Gly bond in repressor LexA.. Functionally, represses a number of genes involved in the response to DNA damage (SOS response), including recA and lexA. In the presence of single-stranded DNA, RecA interacts with LexA causing an autocatalytic cleavage which disrupts the DNA-binding part of LexA, leading to derepression of the SOS regulon and eventually DNA repair. The polypeptide is LexA repressor (Lactobacillus delbrueckii subsp. bulgaricus (strain ATCC 11842 / DSM 20081 / BCRC 10696 / JCM 1002 / NBRC 13953 / NCIMB 11778 / NCTC 12712 / WDCM 00102 / Lb 14)).